A 131-amino-acid chain; its full sequence is Small ribosomal subunit protein uS8 (131 aa).

This sequence belongs to the universal ribosomal protein uS8 family. Part of the 30S ribosomal subunit. Contacts proteins S5 and S12.

In terms of biological role, one of the primary rRNA binding proteins, it binds directly to 16S rRNA central domain where it helps coordinate assembly of the platform of the 30S subunit. This chain is Small ribosomal subunit protein uS8, found in Thermodesulfovibrio yellowstonii (strain ATCC 51303 / DSM 11347 / YP87).